The chain runs to 494 residues: MNKYLVPDSGLTSLSAAELAEKIHSREVTSREVTQAHLDRINDVDGTLHAFLHVGVEEALAAADAVDESLDKGEAPASALAGVPLALKDVFVTTDAPTTCASKMLEGYVAPYDATVTKKIREAGIPILGKTNMDEFAMGSSTENSAYGPTLNPWDIERTPGGSGGGTSAALASGEAPLGIGTDTGGSIRQPAALTNTVGVKPTYGTVSRYGLVACASSLDQGGPTARTVLDTALLHEVIAGHDKYDATSVNRAVAPVVAAAREGARGDLKGTKIGVVKQFDREGYQPGVLEQFHKSVEQLTAQGAEIVEVDCPHFDDALAAYYLILPCEVSSNLARFDGMRYGLREGDDGTHSAEEVMSLSRAAGFGPEVKRRIILGTYALSVGYYDAYYLQAQRVRTLIAQDFAVAYDKCDVLVSPTTPTTAFKLGEKVSDPLAMYNFDLCTLPLNLAGLCGMSLPSGLAPDSQLPTGLQIMAPAFQDDRLYKVGAAFEVGQK.

Active-site charge relay system residues include K88 and S163. S187 (acyl-ester intermediate) is an active-site residue.

The protein belongs to the amidase family. GatA subfamily. Heterotrimer of A, B and C subunits.

The catalysed reaction is L-glutamyl-tRNA(Gln) + L-glutamine + ATP + H2O = L-glutaminyl-tRNA(Gln) + L-glutamate + ADP + phosphate + H(+). Functionally, allows the formation of correctly charged Gln-tRNA(Gln) through the transamidation of misacylated Glu-tRNA(Gln) in organisms which lack glutaminyl-tRNA synthetase. The reaction takes place in the presence of glutamine and ATP through an activated gamma-phospho-Glu-tRNA(Gln). The sequence is that of Glutamyl-tRNA(Gln) amidotransferase subunit A from Corynebacterium diphtheriae (strain ATCC 700971 / NCTC 13129 / Biotype gravis).